The chain runs to 642 residues: Threonine--tRNA ligase (642 aa).

The 61-residue stretch at 1–61 (MPVITLPDGS…HEDASLSIIT (61 aa)) folds into the TGS domain. A catalytic region spans residues 243 to 534 (DHRKIGKQLD…LIEEYAGRFP (292 aa)). Residues Cys334, His385, and His511 each contribute to the Zn(2+) site.

It belongs to the class-II aminoacyl-tRNA synthetase family. As to quaternary structure, homodimer. Requires Zn(2+) as cofactor.

The protein localises to the cytoplasm. It catalyses the reaction tRNA(Thr) + L-threonine + ATP = L-threonyl-tRNA(Thr) + AMP + diphosphate + H(+). Its function is as follows. Catalyzes the attachment of threonine to tRNA(Thr) in a two-step reaction: L-threonine is first activated by ATP to form Thr-AMP and then transferred to the acceptor end of tRNA(Thr). Also edits incorrectly charged L-seryl-tRNA(Thr). In Shewanella amazonensis (strain ATCC BAA-1098 / SB2B), this protein is Threonine--tRNA ligase.